A 197-amino-acid polypeptide reads, in one-letter code: Prefoldin subunit 3 (197 aa).

A2 is subject to N-acetylalanine. Position 59 is an N6-acetyllysine (K59).

The protein belongs to the prefoldin subunit alpha family. As to quaternary structure, heterohexamer of two PFD-alpha type and four PFD-beta type subunits. Binds to the C-terminal part of VHL. Ubiquitous.

It localises to the cytoplasm. It is found in the nucleus. In terms of biological role, binds specifically to cytosolic chaperonin (c-CPN) and transfers target proteins to it. Binds to nascent polypeptide chain and promotes folding in an environment in which there are many competing pathways for nonnative proteins. This chain is Prefoldin subunit 3 (VBP1), found in Homo sapiens (Human).